A 361-amino-acid polypeptide reads, in one-letter code: POU domain, class 3, transcription factor 4 (361 aa).

Disordered stretches follow at residues 99–131 and 144–192; these read PHVAHHSPHTNHPNAWGASPAPNSSITSSGQPL and MLEH…PTSD. Polar residues predominate over residues 119–131; the sequence is APNSSITSSGQPL. Positions 165 to 183 are enriched in basic and acidic residues; it reads VLREPPDHGELGSHHCQDH. Residues 186–260 form the POU-specific domain; sequence EETPTSDELE…LLNKWLEEAD (75 aa). Ser-265 is modified (phosphoserine). The homeobox DNA-binding region spans 278–337; it reads KRKKRTSIEVSVKGVLETHFLKCPKPAAQEISSLADSLQLEKEVVRVWFCNRRQKEKRMT. The segment at 334-361 is disordered; the sequence is KRMTPPGDQQPHEVYSHTVKTDASCHDL. A compositionally biased stretch (basic and acidic residues) spans 343–361; it reads QPHEVYSHTVKTDASCHDL.

This sequence belongs to the POU transcription factor family. Class-3 subfamily. In terms of assembly, interacts with HNRNPU. In terms of tissue distribution, brain specific.

It is found in the nucleus. Its function is as follows. Probable transcription factor which exert its primary action widely during early neural development and in a very limited set of neurons in the mature brain. In Mus musculus (Mouse), this protein is POU domain, class 3, transcription factor 4 (Pou3f4).